The following is a 675-amino-acid chain: Potassium-transporting ATPase ATP-binding subunit 2 (675 aa).

4 helical membrane passes run 34-54, 65-85, 216-236, and 245-265; these read IMFV…FPDI, LITI…SEAF, IALF…IVTL, and LILP…TTIG. The active-site 4-aspartylphosphate intermediate is D304. ATP-binding positions include D341, E345, 372 to 379, and K390; that span reads FTAETRMS. Residues D513 and D517 each coordinate Mg(2+). Helical transmembrane passes span 569–591, 611–631, and 644–664; these read ALTT…ALMM, AIIS…PIAM, and IFIN…FLGI.

Belongs to the cation transport ATPase (P-type) (TC 3.A.3) family. Type IA subfamily. The system is composed of three essential subunits: KdpA, KdpB and KdpC.

It localises to the cell membrane. The catalysed reaction is K(+)(out) + ATP + H2O = K(+)(in) + ADP + phosphate + H(+). Its function is as follows. Part of the high-affinity ATP-driven potassium transport (or Kdp) system, which catalyzes the hydrolysis of ATP coupled with the electrogenic transport of potassium into the cytoplasm. This subunit is responsible for energy coupling to the transport system and for the release of the potassium ions to the cytoplasm. The protein is Potassium-transporting ATPase ATP-binding subunit 2 of Staphylococcus aureus (strain MRSA252).